We begin with the raw amino-acid sequence, 241 residues long: MSAFACSAVAAPARGAIKANSSSVCAIENGKAVAVGTSKQVGAFKPVFAAAKAAKATTFSISCSAASDEVPDMGKRKLMNLLLLGAIAGPTIGAGGPFVSFLVPPKSGGGAGAGQAAKDAAGNDIKVEKWLETXKPGDRSLAQGLKGDATYLIVKEDGTLEKYGLNAVCTHLGCVVPWNQSEGKFMCPCHGSQYDRTGKVVRGPAPLSLALAHVNVLEDGVVAFEPWTETDFRTNTAPWWK.

The transit peptide at 1-62 (MSAFACSAVA…AAKATTFSIS (62 aa)) directs the protein to the cyanelle. A helical transmembrane segment spans residues 83 to 103 (LLGAIAGPTIGAGGPFVSFLV). One can recognise a Rieske domain in the interval 127-223 (VEKWLETXKP…VNVLEDGVVA (97 aa)). [2Fe-2S] cluster is bound by residues Cys169, His171, Cys187, and His190. Cysteines 174 and 189 form a disulfide.

This sequence belongs to the Rieske iron-sulfur protein family. In terms of assembly, the 4 large subunits of the cytochrome b6-f complex are cytochrome b6, subunit IV (17 kDa polypeptide, petD), cytochrome f and the Rieske protein, while the 4 small subunits are petG, petL, petM and petN. The complex functions as a dimer. [2Fe-2S] cluster serves as cofactor.

The protein resides in the plastid. It is found in the cyanelle thylakoid membrane. The catalysed reaction is 2 oxidized [plastocyanin] + a plastoquinol + 2 H(+)(in) = 2 reduced [plastocyanin] + a plastoquinone + 4 H(+)(out). Its function is as follows. Component of the cytochrome b6-f complex, which mediates electron transfer between photosystem II (PSII) and photosystem I (PSI), cyclic electron flow around PSI, and state transitions. The chain is Cytochrome b6-f complex iron-sulfur subunit 2, cyanelle (petC-2) from Cyanophora paradoxa.